The following is a 263-amino-acid chain: ATP synthase subunit delta (263 aa).

It belongs to the ATPase delta chain family. F-type ATPases have 2 components, F(1) - the catalytic core - and F(0) - the membrane proton channel. F(1) has five subunits: alpha(3), beta(3), gamma(1), delta(1), epsilon(1). F(0) has three main subunits: a(1), b(2) and c(10-14). The alpha and beta chains form an alternating ring which encloses part of the gamma chain. F(1) is attached to F(0) by a central stalk formed by the gamma and epsilon chains, while a peripheral stalk is formed by the delta and b chains.

Its subcellular location is the cell membrane. In terms of biological role, f(1)F(0) ATP synthase produces ATP from ADP in the presence of a proton or sodium gradient. F-type ATPases consist of two structural domains, F(1) containing the extramembraneous catalytic core and F(0) containing the membrane proton channel, linked together by a central stalk and a peripheral stalk. During catalysis, ATP synthesis in the catalytic domain of F(1) is coupled via a rotary mechanism of the central stalk subunits to proton translocation. Its function is as follows. This protein is part of the stalk that links CF(0) to CF(1). It either transmits conformational changes from CF(0) to CF(1) or is implicated in proton conduction. The polypeptide is ATP synthase subunit delta (Leifsonia xyli subsp. xyli (strain CTCB07)).